An 850-amino-acid polypeptide reads, in one-letter code: Polyhomeotic-like protein 2 (850 aa).

5 disordered regions span residues 1–79 (MENE…QYLQ), 233–314 (QQTP…RAVP), 335–386 (LPQP…DHAL), 402–436 (THVHKPGNSQQCHLPTLDTGSQNGHPEGGSHPPQR), and 528–553 (MTSGNGNSASSIAGTAPQNGENKPPQ). The span at 15–32 (SVTTNTSGTNSSSGCISS) shows a compositional bias: low complexity. The interaction with BMI1 stretch occupies residues 33–56 (SGGGGGSGGRPTAPQISVYSGIPD). Residues 343–352 (PQPQFVAQQQ) show a composition bias toward low complexity. Polar residues-rich tracts occupy residues 368–380 (LASVSPSLALQSS) and 402–425 (THVHKPGNSQQCHLPTLDTGSQNG). The segment covering 529–543 (TSGNGNSASSIAGTA) has biased composition (low complexity). Positions 550 to 579 (KPPQAIVKPQILTHVIEGFVIQEGAEPFPV) match the HD1 motif. Residues lysine 590 and lysine 592 each participate in a glycyl lysine isopeptide (Lys-Gly) (interchain with G-Cter in SUMO2) cross-link. The disordered stretch occupies residues 597-624 (FLPEKPPQQDHTTTTDSEMEEPYLQESK). Position 611 is a phosphothreonine (threonine 611). Serine 613 bears the Phosphoserine mark. Residue lysine 624 forms a Glycyl lysine isopeptide (Lys-Gly) (interchain with G-Cter in SUMO2) linkage. The segment at 625–659 (EEGTPLKLKCELCGRVDFAYKFKRSKRFCSMACAK) adopts an FCS-type zinc-finger fold. 4 residues coordinate Zn(2+): cysteine 634, cysteine 637, cysteine 653, and cysteine 657. Disordered regions lie at residues 676 to 712 (RSKLQKAGTTTHNRRRASKASLPTLTKDTKKQPSGTV) and 725 to 764 (SQEDSSRCSDNSSYEEPLSPISASSSTSRRRQGQRDLDLP). Lysine 694 participates in a covalent cross-link: Glycyl lysine isopeptide (Lys-Gly) (interchain with G-Cter in SUMO2). Positions 696–712 (SLPTLTKDTKKQPSGTV) are enriched in polar residues. Phosphoserine is present on serine 743. An SAM domain is found at 786 to 850 (WNVEDVYEFI…YARISMLKDS (65 aa)). Lysine 839 is covalently cross-linked (Glycyl lysine isopeptide (Lys-Gly) (interchain with G-Cter in SUMO2)).

Component of a PRC1-like complex. Interacts with CBX4. Interacts with BMI1, PCGF2, PHC1 and RNF2. Interacts with CHTOP. Interacts with the N-terminal region of the SP1 transcription factor and with MAPKAPK2. Interacts with SAMD7. Interacts with SAMD11. As to expression, isoform 2 is ubiquitously expressed in embryos and adult tissues at much higher level than isoform 1.

It is found in the nucleus. Its function is as follows. Component of a Polycomb group (PcG) multiprotein PRC1-like complex, a complex class required to maintain the transcriptionally repressive state of many genes, including Hox genes, throughout development. PcG PRC1 complex acts via chromatin remodeling and modification of histones; it mediates monoubiquitination of histone H2A 'Lys-119', rendering chromatin heritably changed in its expressibility. This Mus musculus (Mouse) protein is Polyhomeotic-like protein 2 (Phc2).